The following is a 922-amino-acid chain: Histidine kinase 5 (922 aa).

2 coiled-coil regions span residues 86–120 (MQDN…EEYK) and 169–205 (KQKA…SQSA). The Histidine kinase domain maps to 373–614 (TMSHEIRSPL…TFTFILPYKV (242 aa)). His376 carries the post-translational modification Phosphohistidine; by autocatalysis. 2 disordered regions span residues 620–639 (YSDD…EPDD) and 728–773 (NGRC…TEVK). A compositionally biased stretch (low complexity) spans 738 to 747 (SCSSSQASSE). Residues 761 to 773 (SHREEEKAETEVK) show a composition bias toward basic and acidic residues. The Response regulatory domain occupies 779 to 921 (KILLVEDNKI…KLRECLQQYL (143 aa)). 3 residues coordinate Mg(2+): Asp785, Asp828, and Cys830. The residue at position 828 (Asp828) is a 4-aspartylphosphate.

In terms of assembly, interacts with AHP1, APH2, APH3, APH5 and APH6, but not with APH4. Present in light-grown but not in etiolated seedlings. Mostly expressed in roots flowers and siliques, and, to a lower extent, in stems and leaves, especially in guard cells.

It is found in the cell membrane. The protein localises to the cytoplasm. It catalyses the reaction ATP + protein L-histidine = ADP + protein N-phospho-L-histidine.. Functionally, functions as a histidine kinase and transmits the stress signal to a downstream MAPK cascade. This protein undergoes an ATP-dependent autophosphorylation at a conserved histidine residue in the kinase core, and a phosphoryl group is then transferred to a conserved aspartate residue in the receiver domain. Negative regulator of the ETR1-dependent abscisic acid (ABA) and ethylene signaling pathway that inhibits the root elongation. Promotes stomatal closure. Regulates stomatal opening by integrating multiple signals via hydrogen peroxide H(2)O(2) homeostasis in guard cells in an ABA-independent manner. May contribute to basal defense mechanisms by closing stomata in the presence of bacterial pathogens. Regulates both hormone levels and ROS production in response to stress. Required for full immunity to bacterial pathogen and necrotrophic fungus. The polypeptide is Histidine kinase 5 (AHK5) (Arabidopsis thaliana (Mouse-ear cress)).